A 333-amino-acid polypeptide reads, in one-letter code: Phosphate acyltransferase (333 aa).

Belongs to the PlsX family. In terms of assembly, homodimer. Probably interacts with PlsY.

The protein localises to the cytoplasm. The enzyme catalyses a fatty acyl-[ACP] + phosphate = an acyl phosphate + holo-[ACP]. Its pathway is lipid metabolism; phospholipid metabolism. Functionally, catalyzes the reversible formation of acyl-phosphate (acyl-PO(4)) from acyl-[acyl-carrier-protein] (acyl-ACP). This enzyme utilizes acyl-ACP as fatty acyl donor, but not acyl-CoA. This is Phosphate acyltransferase from Ligilactobacillus salivarius (strain UCC118) (Lactobacillus salivarius).